The sequence spans 42 residues: Protein YmiD (42 aa).

This Escherichia coli (strain K12) protein is Protein YmiD.